A 52-amino-acid polypeptide reads, in one-letter code: ATP synthase F(1) complex subunit epsilon, mitochondrial (52 aa).

K21, K32, and K37 each carry N6-acetyllysine; alternate. Residues K21, K32, and K37 each carry the N6-succinyllysine; alternate modification. The residue at position 44 (K44) is an N6-acetyllysine.

Belongs to the eukaryotic ATPase epsilon family. Component of the ATP synthase complex composed at least of ATP5F1A/subunit alpha, ATP5F1B/subunit beta, ATP5MC1/subunit c (homooctomer), MT-ATP6/subunit a, MT-ATP8/subunit 8, ATP5ME/subunit e, ATP5MF/subunit f, ATP5MG/subunit g, ATP5MK/subunit k, ATP5MJ/subunit j, ATP5F1C/subunit gamma, ATP5F1D/subunit delta, ATP5F1E/subunit epsilon, ATP5PF/subunit F6, ATP5PB/subunit b, ATP5PD/subunit d, ATP5PO/subunit OSCP. ATP synthase complex consists of a soluble F(1) head domain (subunits alpha(3) and beta(3)) - the catalytic core - and a membrane F(0) domain - the membrane proton channel (subunits c, a, 8, e, f, g, k and j). These two domains are linked by a central stalk (subunits gamma, delta, and epsilon) rotating inside the F1 region and a stationary peripheral stalk (subunits F6, b, d, and OSCP).

The protein localises to the mitochondrion. It localises to the mitochondrion inner membrane. In terms of biological role, subunit epsilon, of the mitochondrial membrane ATP synthase complex (F(1)F(0) ATP synthase or Complex V) that produces ATP from ADP in the presence of a proton gradient across the membrane which is generated by electron transport complexes of the respiratory chain. ATP synthase complex consist of a soluble F(1) head domain - the catalytic core - and a membrane F(1) domain - the membrane proton channel. These two domains are linked by a central stalk rotating inside the F(1) region and a stationary peripheral stalk. During catalysis, ATP synthesis in the catalytic domain of F(1) is coupled via a rotary mechanism of the central stalk subunits to proton translocation. In vivo, can only synthesize ATP although its ATP hydrolase activity can be activated artificially in vitro. May be essential for the assembly of F(1) and may play an important role in the incorporation of the hydrophobic subunit c into the F(1)-c oligomer rotor of the mitochondrial ATP synthase complex. This is ATP synthase F(1) complex subunit epsilon, mitochondrial from Mus musculus (Mouse).